Here is a 256-residue protein sequence, read N- to C-terminus: 6-carboxyhexanoate--CoA ligase (256 aa).

Belongs to the BioW family. Homodimer. Mg(2+) is required as a cofactor.

The enzyme catalyses heptanedioate + ATP + CoA = 6-carboxyhexanoyl-CoA + AMP + diphosphate. It functions in the pathway metabolic intermediate metabolism; pimeloyl-CoA biosynthesis; pimeloyl-CoA from pimelate: step 1/1. Its function is as follows. Catalyzes the transformation of pimelate into pimeloyl-CoA with concomitant hydrolysis of ATP to AMP. This Bacillus amyloliquefaciens (strain ATCC 23350 / DSM 7 / BCRC 11601 / CCUG 28519 / NBRC 15535 / NRRL B-14393 / F) protein is 6-carboxyhexanoate--CoA ligase.